Here is a 699-residue protein sequence, read N- to C-terminus: Elongation factor G (699 aa).

Residues 8–283 (EHIRNIGICA…AVVYFLPSPI (276 aa)) form the tr-type G domain. GTP is bound by residues 17–24 (AHIDAGKT), 81–85 (DTPGH), and 135–138 (NKMD).

Belongs to the TRAFAC class translation factor GTPase superfamily. Classic translation factor GTPase family. EF-G/EF-2 subfamily.

The protein resides in the cytoplasm. Catalyzes the GTP-dependent ribosomal translocation step during translation elongation. During this step, the ribosome changes from the pre-translocational (PRE) to the post-translocational (POST) state as the newly formed A-site-bound peptidyl-tRNA and P-site-bound deacylated tRNA move to the P and E sites, respectively. Catalyzes the coordinated movement of the two tRNA molecules, the mRNA and conformational changes in the ribosome. The chain is Elongation factor G from Rickettsia akari (strain Hartford).